The chain runs to 616 residues: Chaperone protein HscA (616 aa).

Belongs to the heat shock protein 70 family.

In terms of biological role, chaperone involved in the maturation of iron-sulfur cluster-containing proteins. Has a low intrinsic ATPase activity which is markedly stimulated by HscB. Involved in the maturation of IscU. This Citrobacter koseri (strain ATCC BAA-895 / CDC 4225-83 / SGSC4696) protein is Chaperone protein HscA.